Reading from the N-terminus, the 181-residue chain is Adenylate kinase (181 aa).

10 to 15 (GAGKGT) contributes to the ATP binding site. An NMP region spans residues 30-59 (STGDLFRANIGEGTPLGIEAKQYIDAGKLV). AMP contacts are provided by residues threonine 31, arginine 36, 57 to 59 (KLV), 85 to 88 (GFPR), and glutamine 92. Residues 126–132 (SRGRADD) are LID. Arginine 127 contacts ATP. Residues arginine 129 and arginine 140 each contribute to the AMP site. ATP is bound at residue glycine 166.

Belongs to the adenylate kinase family. In terms of assembly, monomer.

It is found in the cytoplasm. It catalyses the reaction AMP + ATP = 2 ADP. It functions in the pathway purine metabolism; AMP biosynthesis via salvage pathway; AMP from ADP: step 1/1. Functionally, catalyzes the reversible transfer of the terminal phosphate group between ATP and AMP. Plays an important role in cellular energy homeostasis and in adenine nucleotide metabolism. The protein is Adenylate kinase of Corynebacterium glutamicum (strain R).